The chain runs to 401 residues: Membrane protein UL43 homolog (401 aa).

The next 10 membrane-spanning stretches (helical) occupy residues 43–63 (FVGI…IDLL), 67–87 (STCL…RVPI), 93–113 (IVTV…SVWV), 124–144 (LIVV…ISLF), 159–179 (ASLL…LVEL), 182–202 (VPIG…FGLA), 259–279 (PGVI…WIVL), 294–314 (YVVF…QLVI), 332–352 (AVCM…SLAF), and 379–399 (ISRW…ATII).

Belongs to the alphaherpesvirinae HHV-1 UL43 family.

It is found in the membrane. The chain is Membrane protein UL43 homolog from Equine herpesvirus 1 (strain Ab4p) (EHV-1).